A 318-amino-acid polypeptide reads, in one-letter code: D-alanine--D-alanine ligase B (318 aa).

The ATP-grasp domain maps to 116-311 (KQVWQSLGIP…FQQLVLAILA (196 aa)). 142–197 (STELGFPLIVKPAHEGSSIGMAKVNSTQELVAAWQDAAKYDSQVLVEQWIHGPEFT) is an ATP binding site. Positions 265, 278, and 280 each coordinate Mg(2+).

Belongs to the D-alanine--D-alanine ligase family. Mg(2+) serves as cofactor. Mn(2+) is required as a cofactor.

The protein resides in the cytoplasm. It carries out the reaction 2 D-alanine + ATP = D-alanyl-D-alanine + ADP + phosphate + H(+). Its pathway is cell wall biogenesis; peptidoglycan biosynthesis. Functionally, cell wall formation. The polypeptide is D-alanine--D-alanine ligase B (Pseudomonas putida (strain ATCC 47054 / DSM 6125 / CFBP 8728 / NCIMB 11950 / KT2440)).